The primary structure comprises 169 residues: MSCILTALCKKGQANLNSLIKLQNKKVKNYYVKNNETAIDKMLCIAADIKGQVEQLELVNQYLGAPESEKLDFVYDCSDLDINEKDLKSLCLTKNIAYFTQKYNAPTVLKAQAAVYDSFIKHSELFINAICQMDEKQQVNNFCLDELVKLKLIAIKHLCALEYVIENSI.

Interacts with protein kinase PK1.

Plays a role in the stimulation of the viral kinase PK1 function in very late transcription and in expression of genes required for budded virus production. The sequence is that of Protein kinase-interacting protein PIKP1 (AC24) from Lepidoptera (butterflies and moths).